A 439-amino-acid chain; its full sequence is SET domain-containing protein 4 (439 aa).

The span at 1-19 (MQRRRGRTERARKRRRRSS) shows a compositional bias: basic residues. The segment at 1-25 (MQRRRGRTERARKRRRRSSGSRAVN) is disordered. Residues 47–272 (TDLVPASFPG…KHQEVFICYG (226 aa)) form the SET domain. S-adenosyl-L-methionine is bound at residue tyrosine 271.

The protein belongs to the class V-like SAM-binding methyltransferase superfamily. SETD4 family. Forms a ternary complex with TBK1 and ZNF268; the interaction with TBK1 is ZNF268-dependent and leads to TBK1 monomethylation. In terms of tissue distribution, expressed in the forebrain subventricular zone, in quiescent neural stem cells.

The protein localises to the cytoplasm. It localises to the cytosol. Its subcellular location is the nucleus. It carries out the reaction L-lysyl(4)-[histone H3] + S-adenosyl-L-methionine = N(6)-methyl-L-lysyl(4)-[histone H3] + S-adenosyl-L-homocysteine + H(+). The enzyme catalyses N(6)-methyl-L-lysyl(4)-[histone H3] + S-adenosyl-L-methionine = N(6),N(6)-dimethyl-L-lysyl(4)-[histone H3] + S-adenosyl-L-homocysteine + H(+). The catalysed reaction is L-lysyl(20)-[histone H4] + S-adenosyl-L-methionine = N(6)-methyl-L-lysyl(20)-[histone H4] + S-adenosyl-L-homocysteine + H(+). It catalyses the reaction N(6)-methyl-L-lysyl(20)-[histone H4] + S-adenosyl-L-methionine = N(6),N(6)-dimethyl-L-lysyl(20)-[histone H4] + S-adenosyl-L-homocysteine + H(+). It carries out the reaction N(6),N(6)-dimethyl-L-lysyl(20)-[histone H4] + S-adenosyl-L-methionine = N(6),N(6),N(6)-trimethyl-L-lysyl(20)-[histone H4] + S-adenosyl-L-homocysteine + H(+). The enzyme catalyses L-lysyl-[protein] + S-adenosyl-L-methionine = N(6)-methyl-L-lysyl-[protein] + S-adenosyl-L-homocysteine + H(+). Functionally, protein-lysine N-methyltransferase that methylates both histones and non-histone proteins. Via its catalytic activity, regulates many processes, including cell proliferation, cell differentiation, inflammatory response and apoptosis. Regulates the inflammatory response by mediating mono- and dimethylation of 'Lys-4' of histone H3 (H3K4me1 and H3K4me2, respectively), leading to activate the transcription of pro-inflammatory cytokines IL6 and TNF-alpha. Also involved in the regulation of stem cell quiescence by catalyzing the trimethylation of 'Lys-20' of histone H4 (H4K20me3), thereby promoting heterochromatin formation. In the brain, epigenetically controls quiescence of neural stem cells for sustaining a protected neural stem cell population and maintaining a stem cell reservoir for neurogenesis. Involved in proliferation, migration, paracrine and myogenic differentiation of bone marrow mesenchymal stem cells (BMSCs). Through the catalysis of XRCC5/Ku70 trimethylation, regulates BAX-mediated apoptosis. SETD4-catalyzed XRCC5 methylation results in XRCC5 translocation to the cytoplasm, where it interacts with BAX, sequestering it from the mitochondria, hence preventing BAX-mediated apoptosis. This chain is SET domain-containing protein 4, found in Mus musculus (Mouse).